A 618-amino-acid chain; its full sequence is Putative UDP-glucuronate:xylan alpha-glucuronosyltransferase 3 (618 aa).

A helical; Signal-anchor for type II membrane protein membrane pass occupies residues 32-54; sequence GVKFNTLKLVLICIMLGALFTIY. Positions 379 and 381 each coordinate Mn(2+). Substrate is bound by residues 379–381, 408–410, 435–439, and 489–495; these read DAD, NSG, NGGDQ, and HYLGYNK. His-489 is a binding site for Mn(2+). Positions 598-608 are enriched in low complexity; that stretch reads TNNSSTTTTSS. Positions 598–618 are disordered; the sequence is TNNSSTTTTSSPPHKTALPSL.

Belongs to the glycosyltransferase 8 family. Glycogenin subfamily. It depends on Mn(2+) as a cofactor.

It is found in the golgi apparatus membrane. In terms of biological role, may be involved in the substitutions of the xylan backbone in stem glucuronoxylan. The protein is Putative UDP-glucuronate:xylan alpha-glucuronosyltransferase 3 (GUX3) of Arabidopsis thaliana (Mouse-ear cress).